A 990-amino-acid polypeptide reads, in one-letter code: Pro-apoptotic serine protease NMA111 (990 aa).

The disordered stretch occupies residues 1–32 (MSVTNSNRKRSLSEVSEGSDPEAPAKTRNSYT). Residues 73-263 (VVSIHFSQVA…LPLDRILRAL (191 aa)) are serine protease. Active-site charge relay system residues include His111, Asp142, and Ser225. 2 consecutive PDZ domains span residues 290–368 (RRLG…QRGG) and 758–843 (SILT…VREG).

This sequence belongs to the peptidase S1C family.

The protein localises to the nucleus. Functionally, nuclear serine protease which mediates apoptosis. This Vanderwaltozyma polyspora (strain ATCC 22028 / DSM 70294 / BCRC 21397 / CBS 2163 / NBRC 10782 / NRRL Y-8283 / UCD 57-17) (Kluyveromyces polysporus) protein is Pro-apoptotic serine protease NMA111 (NMA111).